A 293-amino-acid polypeptide reads, in one-letter code: Pyridoxal 5'-phosphate synthase subunit PdxS (293 aa).

Asp-23 contacts D-ribose 5-phosphate. The active-site Schiff-base intermediate with D-ribose 5-phosphate is Lys-80. Gly-152 is a D-ribose 5-phosphate binding site. Arg-164 contacts D-glyceraldehyde 3-phosphate. Residues Gly-213 and 234-235 (GS) each bind D-ribose 5-phosphate.

Belongs to the PdxS/SNZ family. In terms of assembly, in the presence of PdxT, forms a dodecamer of heterodimers.

It carries out the reaction aldehydo-D-ribose 5-phosphate + D-glyceraldehyde 3-phosphate + L-glutamine = pyridoxal 5'-phosphate + L-glutamate + phosphate + 3 H2O + H(+). Its pathway is cofactor biosynthesis; pyridoxal 5'-phosphate biosynthesis. Functionally, catalyzes the formation of pyridoxal 5'-phosphate from ribose 5-phosphate (RBP), glyceraldehyde 3-phosphate (G3P) and ammonia. The ammonia is provided by the PdxT subunit. Can also use ribulose 5-phosphate and dihydroxyacetone phosphate as substrates, resulting from enzyme-catalyzed isomerization of RBP and G3P, respectively. The protein is Pyridoxal 5'-phosphate synthase subunit PdxS of Roseiflexus sp. (strain RS-1).